We begin with the raw amino-acid sequence, 557 residues long: Hepatocyte nuclear factor 1-beta (557 aa).

A dimerization region spans residues 1 to 31 (MVSKLTSLQQELLSALLSSGVTKEVLVQALE). Residues 1–32 (MVSKLTSLQQELLSALLSSGVTKEVLVQALEE) form the HNF-p1 domain. A phosphoserine mark is found at Ser49, Ser52, Ser75, and Ser80. Positions 64–85 (TLTNGHAKGRLSGDEGSEDGDD) are disordered. A POU-specific atypical domain is found at 93 to 188 (KELQALNTEE…ILRQFNQTVQ (96 aa)). Residues 231-311 (MRRNRFKWGP…NRRKEEAFRQ (81 aa)) constitute a DNA-binding region (homeobox; HNF1-type). Residues 324 to 352 (HSLNPLLSHGSPHHQPSSSPPNKLSGVRY) form a disordered region. The segment covering 328-344 (PLLSHGSPHHQPSSSPP) has biased composition (low complexity).

This sequence belongs to the HNF1 homeobox family. Binds DNA as a dimer. Can form homodimer or heterodimer with HNF1-alpha. Interacts (via HNF-p1 domain) with PCBD1; the interaction increases its transactivation activity.

It localises to the nucleus. Transcription factor that binds to the inverted palindrome 5'-GTTAATNATTAAC-3'. Binds to the FPC element in the cAMP regulatory unit of the PLAU gene. Transcriptional activity is increased by coactivator PCBD1. This is Hepatocyte nuclear factor 1-beta (HNF1B) from Homo sapiens (Human).